A 970-amino-acid chain; its full sequence is Anaphase-promoting complex subunit 3 (970 aa).

TPR repeat units follow at residues 35-68 (EDNL…TMIK), 74-107 (ALSN…NNNN), 142-175 (NNNS…NSIS), and 185-218 (GSVY…YPFL). A disordered region spans residues 106 to 149 (NNNNNNNNNNNNNNNNNNNNNNNKDKCNNSNKNNDSNNNSNSNN). A disordered region spans residues 274–300 (KVNNNNNNNNNNNNNINNNNSSNKNNE). 2 TPR repeats span residues 319–353 (IKPN…TPIN) and 361–394 (TNQQ…TPQT). Disordered regions lie at residues 358–379 (IQQT…PSQQ), 414–525 (PIPM…TTTT), and 556–582 (SSLS…HNKS). Low complexity predominate over residues 359–379 (QQTNQQQQQQQQQQPQQPSQQ). Positions 424-443 (SKGSQHPPSSNSQTPYTPST) are enriched in polar residues. Over residues 446-460 (VHHHQKQQPHQHKKS) the composition is skewed to basic residues. The span at 500-525 (TSSTSKQQQQQQQTKQQTTTTTTTTT) shows a compositional bias: low complexity. 9 TPR repeats span residues 546-580 (TEEF…HHHN), 636-671 (LELF…QYRT), 672-705 (GWVL…EPYR), 740-773 (PYSW…DPDM), 775-807 (YAYT…DPRH), 808-841 (YNAF…NESS), 843-876 (VLCC…QPKN), 878-910 (FAKF…EPKE), and 911-944 (TPIY…DPKN). The span at 570–580 (YQQHHHLHHHN) shows a compositional bias: basic residues.

Belongs to the APC3/CDC27 family. In terms of assembly, the APC/C is composed of at least 13 subunits that stay tightly associated throughout the cell cycle: anapc1, anapc2, anapc3, anapc4, anapc5, anapc6, anapc7, anapc8, anapc10, anapc11, cdc20, cdc26 and cdh1.

It is found in the nucleus. The protein operates within protein modification; protein ubiquitination. Component of the anaphase promoting complex/cyclosome (APC/C), a cell cycle-regulated E3 ubiquitin-protein ligase complex that controls progression through mitosis and the G1 phase of the cell cycle. This chain is Anaphase-promoting complex subunit 3 (anapc3), found in Dictyostelium discoideum (Social amoeba).